The following is a 693-amino-acid chain: Oxysterol-binding protein-related protein 2B (693 aa).

Residues 1-15 (MPLTRSKSLPATENG) show a composition bias toward polar residues. Residues 1–22 (MPLTRSKSLPATENGGSDRETL) are disordered. Positions 25-154 (GRSVAGILYK…WLQALASTRG (130 aa)) constitute a PH domain. A coiled-coil region spans residues 207 to 239 (EVQEQIKLLHEERKKLLDALRQLEMANLEAEAS). Disordered regions lie at residues 256–298 (LGRG…GEPD) and 600–639 (EKLP…RMSR). A compositionally biased stretch (acidic residues) spans 274-284 (QEFEDISEEDE). Basic and acidic residues-rich tracts occupy residues 285–294 (ASFHDTKESF) and 600–635 (EKLP…ERRQ). The stretch at 612–643 (DQRHLENGEYEKANEEKQRLERRQRMSRQIQE) forms a coiled coil.

It belongs to the OSBP family. As to expression, expressed in roots, leaves, stems and flowers.

May be involved in the transport of sterols. The sequence is that of Oxysterol-binding protein-related protein 2B (ORP2B) from Arabidopsis thaliana (Mouse-ear cress).